Reading from the N-terminus, the 401-residue chain is Phosrestin-1 (401 aa).

Belongs to the arrestin family.

Its function is as follows. Directly interacts with light-activated rhodopsin thereby activating the phosphorylation of metarhodopsin. Inhibits the dephosphorylation of metarhodopsin. This Calliphora vicina (Blue blowfly) protein is Phosrestin-1 (ARR2).